Here is a 217-residue protein sequence, read N- to C-terminus: CXXC-type zinc finger protein 4 (217 aa).

Residues 1 to 20 form a disordered region; sequence MHRNDSQRLGKPGGAPESLQ. The CXXC-type zinc-finger motif lies at 122–163; it reads AKKKRKRCGVCVPCKRLINCGVCSSCRNRKTGHQICKFRKCE. Residues Cys129, Cys132, Cys135, Cys141, Cys144, Cys147, Cys157, and Cys162 each contribute to the Zn(2+) site.

Its subcellular location is the cytoplasm. In terms of biological role, acts as a negative regulator of the Wnt signaling pathway required for anterior neural structure formation. Ectopic expression induces ventralization. Binds preferentially to DNA containing cytidine-phosphate-guanosine (CpG) dinucleotides over CpH (H=A, T, and C), hemimethylated-CpG and hemimethylated-hydroxymethyl-CpG. This is CXXC-type zinc finger protein 4 (cxxc4) from Xenopus laevis (African clawed frog).